Consider the following 155-residue polypeptide: Crossover junction endodeoxyribonuclease RuvC (155 aa).

Catalysis depends on residues Asp-7, Glu-68, and Asp-140. Mg(2+) is bound by residues Asp-7, Glu-68, and Asp-140.

The protein belongs to the RuvC family. As to quaternary structure, homodimer which binds Holliday junction (HJ) DNA. The HJ becomes 2-fold symmetrical on binding to RuvC with unstacked arms; it has a different conformation from HJ DNA in complex with RuvA. In the full resolvosome a probable DNA-RuvA(4)-RuvB(12)-RuvC(2) complex forms which resolves the HJ. Mg(2+) is required as a cofactor.

It localises to the cytoplasm. It catalyses the reaction Endonucleolytic cleavage at a junction such as a reciprocal single-stranded crossover between two homologous DNA duplexes (Holliday junction).. Its function is as follows. The RuvA-RuvB-RuvC complex processes Holliday junction (HJ) DNA during genetic recombination and DNA repair. Endonuclease that resolves HJ intermediates. Cleaves cruciform DNA by making single-stranded nicks across the HJ at symmetrical positions within the homologous arms, yielding a 5'-phosphate and a 3'-hydroxyl group; requires a central core of homology in the junction. The consensus cleavage sequence is 5'-(A/T)TT(C/G)-3'. Cleavage occurs on the 3'-side of the TT dinucleotide at the point of strand exchange. HJ branch migration catalyzed by RuvA-RuvB allows RuvC to scan DNA until it finds its consensus sequence, where it cleaves and resolves the cruciform DNA. The polypeptide is Crossover junction endodeoxyribonuclease RuvC (Prochlorococcus marinus (strain SARG / CCMP1375 / SS120)).